Reading from the N-terminus, the 49-residue chain is Small, acid-soluble spore protein O (49 aa).

A disordered region spans residues 1-49; the sequence is MGKRKANHTISGMNAASAQGQGTGYNEEFANEPFTPAERQNNKKRKKNQ. The segment covering 8–20 has biased composition (polar residues); sequence HTISGMNAASAQG.

It belongs to the SspO family.

It localises to the spore core. The polypeptide is Small, acid-soluble spore protein O (Bacillus cereus (strain ATCC 14579 / DSM 31 / CCUG 7414 / JCM 2152 / NBRC 15305 / NCIMB 9373 / NCTC 2599 / NRRL B-3711)).